Consider the following 796-residue polypeptide: Striatin-3 (796 aa).

Met1 bears the N-acetylmethionine mark. Over residues Met1–Gly13 the composition is skewed to gly residues. The tract at residues Met1 to Pro60 is disordered. The caveolin-binding stretch occupies residues Tyr71–Phe79. Residues Ala77 to Lys136 adopt a coiled-coil conformation. Thr150 is modified (phosphothreonine). The interval Gln166 to Leu183 is calmodulin-binding. Residues Ser202, Ser214, Ser229, Ser257, and Ser334 each carry the phosphoserine modification. Disordered stretches follow at residues Glu252–Gly271 and Glu311–Pro335. Over residues Asn253–Met264 the composition is skewed to acidic residues. WD repeat units follow at residues Ser477–Lys516, Ala530–Tyr569, Ala583–Cys622, Gln678–Ser717, Ala720–Glu759, and Lys766–Phe795.

The protein belongs to the WD repeat striatin family. Tetramerizes. Part of the core of STRIPAK complexes composed of PP2A catalytic and scaffolding subunits, the striatins (PP2A regulatory subunits), the striatin-associated proteins MOB4, STRIP1 and STRIP2, PDCD10 and members of the STE20 kinases, such as STK24 and STK26. The STRIPAK complex can be extended by adapter proteins such as SLMAP:SIKE1 or CTTNBP2NL. Interacts with CDC42BPB. Mainly expressed in the brain and muscles but is also detected at low levels in various tissues such as kidney, spleen and lung.

The protein localises to the cytoplasm. Its subcellular location is the membrane. Its function is as follows. Calmodulin-binding scaffolding protein which is the center of the striatin-interacting phosphatase and kinase (STRIPAK) complexes. STRIPAK complexes have critical roles in protein (de)phosphorylation and are regulators of multiple signaling pathways including Hippo, MAPK, nuclear receptor and cytoskeleton remodeling. Different types of STRIPAK complexes are involved in a variety of biological processes such as cell growth, differentiation, apoptosis, metabolism and immune regulation. In Mus musculus (Mouse), this protein is Striatin-3 (Strn3).